Consider the following 622-residue polypeptide: Presenilin-A (622 aa).

Residues 1-16 (MKENEDEINKTDEKYK) show a composition bias toward basic and acidic residues. Disordered regions lie at residues 1-65 (MKEN…NLEN) and 132-160 (VSEQNSDECGSKVDKDLDEDDDDDDDETE). The Cytoplasmic portion of the chain corresponds to 1-168 (MKENEDEINK…TEVPELVDYS (168 aa)). Low complexity predominate over residues 21–62 (SNNGNNKNKNNNNNNNNNNNNNNNNNNNNNNNNNNNNNGNSN). A compositionally biased stretch (acidic residues) spans 147–160 (DLDEDDDDDDDETE). Residues 169–189 (EMIVSILYPVCITMVIVVLAI) traverse the membrane as a helical segment. Residues 190-227 (RAISSSTSKNSQIVEISNDNSGGNGDSSSGADKMVFDS) are Lumenal-facing. Residues 228 to 248 (VVNSLIFLAVIILSTTIMVVL) traverse the membrane as a helical segment. Topologically, residues 249–265 (YKFKLMKALYAWLMGTS) are cytoplasmic. Residues 266 to 286 (ILLLGVFGGFLFLILLAYLNL) traverse the membrane as a helical segment. Residues 287–289 (GLD) lie on the Lumenal side of the membrane. The helical transmembrane segment at 290-310 (YVTFVIVVWNFSVGGIVCIFW) threads the bilayer. Y311 is a topological domain (cytoplasmic). Residues 312-332 (SPKLLNQGYLISISVLMALFF) traverse the membrane as a helical segment. The Lumenal portion of the chain corresponds to 333 to 341 (SRLPDWTTW). The chain crosses the membrane as a helical span at residues 342–362 (GILSIVSIYDIFAVLCPGGPL). D351 is a catalytic residue. Topologically, residues 363-538 (RILIETAQKR…SYVKPKQSIR (176 aa)) are cytoplasmic. Residues 419 to 477 (NNNNNEDENKNNTEDGNNNNNKNKNNNNNNNNRIENENGAENSSENGSITPPPTIPNFI) form a disordered region. The span at 432–466 (EDGNNNNNKNKNNNNNNNNRIENENGAENSSENGS) shows a compositional bias: low complexity. The helical transmembrane segment at 539 to 559 (LGLGDFVFYSVLIGKAASYQI) threads the bilayer. D543 is an active-site residue. The Lumenal portion of the chain corresponds to 560–562 (TTV). The chain crosses the membrane as a helical span at residues 563–583 (FTVFIAIITGLFLTLILLAVF). At 584–588 (RRALP) the chain is on the cytoplasmic side. The PAL motif lies at 588-590 (PAL). Residues 589–609 (ALPMSIIFGIIVFFLTFKILI) constitute an intramembrane region (helical). The Cytoplasmic portion of the chain corresponds to 610–622 (QYIYFLGENQIFV).

The protein belongs to the peptidase A22A family. As to quaternary structure, homodimer. Component of the gamma-secretase complex, a complex composed of a presenilin homodimer, nicastrin, aph1 and pen2.

It is found in the endoplasmic reticulum membrane. The protein localises to the golgi apparatus membrane. In terms of biological role, probable catalytic subunit of the gamma-secretase complex, an endoprotease complex that catalyzes the intramembrane cleavage of integral membrane proteins such as Notch receptors. Requires the other members of the gamma-secretase complex to have a protease activity. The sequence is that of Presenilin-A (psenA) from Dictyostelium discoideum (Social amoeba).